Here is a 142-residue protein sequence, read N- to C-terminus: Putative pre-16S rRNA nuclease (142 aa).

The protein belongs to the YqgF nuclease family.

It is found in the cytoplasm. Its function is as follows. Could be a nuclease involved in processing of the 5'-end of pre-16S rRNA. The polypeptide is Putative pre-16S rRNA nuclease (Ruminiclostridium cellulolyticum (strain ATCC 35319 / DSM 5812 / JCM 6584 / H10) (Clostridium cellulolyticum)).